A 421-amino-acid polypeptide reads, in one-letter code: Ankyrin repeat domain-containing protein 61 (421 aa).

ANK repeat units lie at residues 27 to 57 (TLHS…NQPL), 74 to 103 (QPIF…DPEV), 107 to 146 (QGFT…NAVL), 166 to 195 (NKHS…QVNA), 199 to 228 (SSMT…NVNC), 233 to 272 (TGNT…QVNA), 276 to 305 (EGQT…NVNI), and 309 to 342 (NGES…PLRL).

This is Ankyrin repeat domain-containing protein 61 (Ankrd61) from Mus musculus (Mouse).